The primary structure comprises 90 residues: Molybdopterin synthase sulfur carrier subunit (90 aa).

At Gly-90 the chain carries 1-thioglycine; alternate. Gly-90 carries the glycyl adenylate; alternate modification.

The protein belongs to the MoaD family. MOCS2A subfamily. In terms of assembly, heterotetramer; composed of 2 small (Mocs2A) and 2 large (Mocs2B) subunits. Post-translationally, C-terminal thiocarboxylation occurs in 2 steps, it is first acyl-adenylated (-COAMP) via the hesA/moeB/thiF part of MOCS3, then thiocarboxylated (-COSH) via the rhodanese domain of MOCS3.

It localises to the cytoplasm. It participates in cofactor biosynthesis; molybdopterin biosynthesis. Acts as a sulfur carrier required for molybdopterin biosynthesis. Component of the molybdopterin synthase complex that catalyzes the conversion of precursor Z into molybdopterin by mediating the incorporation of 2 sulfur atoms into precursor Z to generate a dithiolene group. In the complex, serves as sulfur donor by being thiocarboxylated (-COSH) at its C-terminus by MOCS3. After interaction with Mocs2B, the sulfur is then transferred to precursor Z to form molybdopterin. Involved during biosynthesis of the molybdenum cofactor. The polypeptide is Molybdopterin synthase sulfur carrier subunit (Drosophila melanogaster (Fruit fly)).